A 191-amino-acid chain; its full sequence is Protein Ves (191 aa).

It belongs to the Ves family.

This Escherichia coli (strain 55989 / EAEC) protein is Protein Ves.